A 569-amino-acid polypeptide reads, in one-letter code: Sulfite reductase [NADPH] hemoprotein beta-component (569 aa).

Residues cysteine 434, cysteine 440, cysteine 479, and cysteine 483 each contribute to the [4Fe-4S] cluster site. Cysteine 483 is a binding site for siroheme.

The protein belongs to the nitrite and sulfite reductase 4Fe-4S domain family. In terms of assembly, alpha(8)-beta(8). The alpha component is a flavoprotein, the beta component is a hemoprotein. Siroheme is required as a cofactor. It depends on [4Fe-4S] cluster as a cofactor.

It carries out the reaction hydrogen sulfide + 3 NADP(+) + 3 H2O = sulfite + 3 NADPH + 4 H(+). Its pathway is sulfur metabolism; hydrogen sulfide biosynthesis; hydrogen sulfide from sulfite (NADPH route): step 1/1. Its function is as follows. Component of the sulfite reductase complex that catalyzes the 6-electron reduction of sulfite to sulfide. This is one of several activities required for the biosynthesis of L-cysteine from sulfate. The sequence is that of Sulfite reductase [NADPH] hemoprotein beta-component from Staphylococcus carnosus (strain TM300).